A 223-amino-acid chain; its full sequence is Protein BTG4 (223 aa).

The protein belongs to the BTG family. As to quaternary structure, interacts with CNOT7. Interacts with EIF4E. Interacts with CNOT8. As to expression, expressed in oocytes after germinal vesicle breakdown. Expressed in testis and in olfactory epithelium.

Functionally, adapter protein that bridges CNOT7, a catalytic subunit of the CCR4-NOT complex, to EIF4E. Facilitates maternal mRNAs decay during the maturation of oocytes and in the fertilized egg, and is required for the maternal-zygotic transition (MZT), zygotic cleavage and initiation of embryonic development. This Homo sapiens (Human) protein is Protein BTG4 (BTG4).